The primary structure comprises 305 residues: UDP-N-acetylenolpyruvoylglucosamine reductase 2 (305 aa).

An FAD-binding PCMH-type domain is found at 33–197 (VGGKADVFVA…LEARFELEEG (165 aa)). R176 is a catalytic residue. S226 functions as the Proton donor in the catalytic mechanism. Residue E296 is part of the active site.

It belongs to the MurB family. Requires FAD as cofactor.

The protein resides in the cytoplasm. It carries out the reaction UDP-N-acetyl-alpha-D-muramate + NADP(+) = UDP-N-acetyl-3-O-(1-carboxyvinyl)-alpha-D-glucosamine + NADPH + H(+). Its pathway is cell wall biogenesis; peptidoglycan biosynthesis. Functionally, cell wall formation. The chain is UDP-N-acetylenolpyruvoylglucosamine reductase 2 from Bacillus cereus (strain ZK / E33L).